Reading from the N-terminus, the 473-residue chain is Glutamate--tRNA ligase (473 aa).

The 'HIGH' region motif lies at 11–21 (PSPTGFLHIGG). The 'KMSKS' region motif lies at 240-244 (KLSKR). ATP is bound at residue Lys243.

The protein belongs to the class-I aminoacyl-tRNA synthetase family. Glutamate--tRNA ligase type 1 subfamily. Monomer.

The protein localises to the cytoplasm. It carries out the reaction tRNA(Glu) + L-glutamate + ATP = L-glutamyl-tRNA(Glu) + AMP + diphosphate. Its function is as follows. Catalyzes the attachment of glutamate to tRNA(Glu) in a two-step reaction: glutamate is first activated by ATP to form Glu-AMP and then transferred to the acceptor end of tRNA(Glu). This Rhodopseudomonas palustris (strain TIE-1) protein is Glutamate--tRNA ligase.